A 96-amino-acid polypeptide reads, in one-letter code: Myoglobin (96 aa).

The 96-residue stretch at 1 to 96 (GLSDGEWQLV…AKTKELGFLG (96 aa)) folds into the Globin domain. Ser-3 is modified (phosphoserine). His-61 contacts nitrite. His-61 lines the O2 pocket. At Thr-64 the chain carries Phosphothreonine.

It belongs to the globin family. In terms of assembly, monomeric.

The protein localises to the cytoplasm. Its subcellular location is the sarcoplasm. It carries out the reaction Fe(III)-heme b-[protein] + nitric oxide + H2O = Fe(II)-heme b-[protein] + nitrite + 2 H(+). It catalyses the reaction H2O2 + AH2 = A + 2 H2O. In terms of biological role, monomeric heme protein which primary function is to store oxygen and facilitate its diffusion within muscle tissues. Reversibly binds oxygen through a pentacoordinated heme iron and enables its timely and efficient release as needed during periods of heightened demand. Depending on the oxidative conditions of tissues and cells, and in addition to its ability to bind oxygen, it also has a nitrite reductase activity whereby it regulates the production of bioactive nitric oxide. Under stress conditions, like hypoxia and anoxia, it also protects cells against reactive oxygen species thanks to its pseudoperoxidase activity. This Ailuropoda melanoleuca (Giant panda) protein is Myoglobin (MB).